A 79-amino-acid polypeptide reads, in one-letter code: Small ribosomal subunit protein uS17 (79 aa).

It belongs to the universal ribosomal protein uS17 family. Part of the 30S ribosomal subunit.

Its function is as follows. One of the primary rRNA binding proteins, it binds specifically to the 5'-end of 16S ribosomal RNA. This Orientia tsutsugamushi (strain Ikeda) (Rickettsia tsutsugamushi) protein is Small ribosomal subunit protein uS17.